We begin with the raw amino-acid sequence, 218 residues long: MNKFWETGRKIVAVGRNYAQHAKELGNEIPSEPFFFLKPTSSYLLQGTGPIEIPLESSDIHHEVELGIVIGKKGRDIDLKSAMDYVSGYTLALDMTSRDQQSIAKAKSLPWTVSKGYDTFCPISGFIPKDKIKDLNNVELWCSVDGQIKQKGNTNQMIFDVPHLIQYISSIMTLESGDLILTGTPSGVGPVKPGQVIKCGITGLDTDMQFDIILRKRN.

Residues 1 to 18 (MNKFWETGRKIVAVGRNY) constitute a mitochondrion transit peptide. Residues Glu-63, Glu-65, and Asp-94 each coordinate Mg(2+).

It belongs to the FAH family. Homodimer. It depends on Mg(2+) as a cofactor. Mn(2+) serves as cofactor.

It localises to the mitochondrion. The protein localises to the cytoplasm. It is found in the cytosol. The enzyme catalyses a 3-acylpyruvate + H2O = a carboxylate + pyruvate + H(+). The catalysed reaction is acetylpyruvate + H2O = acetate + pyruvate + H(+). It carries out the reaction 3-fumarylpyruvate + H2O = fumarate + pyruvate + H(+). It catalyses the reaction oxaloacetate + H(+) = pyruvate + CO2. In terms of biological role, mitochondrial protein that acts as an oxaloacetate decarboxylase (ODx), catalyzing the decarboxylation of oxaloacetate (OAA) to pyruvate and CO(2), and as such is likely a regulatory enzyme in the TCA cycle. Also displays acylpyruvase activity, being able to hydrolyze acetylpyruvate and fumarylpyruvate in vitro. The protein is Oxaloacetate decarboxylase, mitochondrial (fahd1) of Dictyostelium discoideum (Social amoeba).